A 480-amino-acid chain; its full sequence is UDP-glycosyltransferase 72B1 (480 aa).

His19 serves as the catalytic Proton acceptor. Asp117 serves as the catalytic Charge relay. UDP is bound by residues Ser277, Trp346, Ala347, and His364. Positions 277, 346, 347, 364, 367, 368, 369, 372, 386, 388, and 389 each coordinate UDP-alpha-D-glucose. Residues Asn368, Ser369, Glu372, and Tyr386 each coordinate UDP.

Belongs to the UDP-glycosyltransferase family.

The enzyme catalyses hydroquinone + UDP-alpha-D-glucose = hydroquinone O-beta-D-glucopyranoside + UDP + H(+). In terms of biological role, bifunctional O-glycosyltransferase and N-glycosyltransferase that can detoxify xenobiotics. Possesses high activity to metabolize the persistent pollutants 2,4,5-trichlorophenol (TCP) and 3,4-dichloroaniline (DCA). Also active on benzoates and benzoate derivatives in vitro. The sequence is that of UDP-glycosyltransferase 72B1 (UGT72B1) from Arabidopsis thaliana (Mouse-ear cress).